A 369-amino-acid polypeptide reads, in one-letter code: Aminomethyltransferase (369 aa).

This sequence belongs to the GcvT family. The glycine cleavage system is composed of four proteins: P, T, L and H.

The catalysed reaction is N(6)-[(R)-S(8)-aminomethyldihydrolipoyl]-L-lysyl-[protein] + (6S)-5,6,7,8-tetrahydrofolate = N(6)-[(R)-dihydrolipoyl]-L-lysyl-[protein] + (6R)-5,10-methylene-5,6,7,8-tetrahydrofolate + NH4(+). Its function is as follows. The glycine cleavage system catalyzes the degradation of glycine. The polypeptide is Aminomethyltransferase (Synechococcus sp. (strain CC9311)).